Consider the following 489-residue polypeptide: Membrane-bound lytic murein transglycosylase F (489 aa).

The N-terminal stretch at 1–32 (MFALTAYRLRCAAWLLATGIFLLLAGCSEAKA) is a signal peptide. Residues 33-268 (PTALERVQKE…RLKDRYYGHV (236 aa)) are non-LT domain. The segment at 269-489 (DVLGYVGAYT…PEEDSGDEKL (221 aa)) is LT domain. The active site involves Glu315. The disordered stretch occupies residues 466-489 (AESGLHLPGVNKTRPEEDSGDEKL). Basic and acidic residues predominate over residues 478–489 (TRPEEDSGDEKL).

The protein in the N-terminal section; belongs to the bacterial solute-binding protein 3 family. It in the C-terminal section; belongs to the transglycosylase Slt family.

Its subcellular location is the cell outer membrane. It catalyses the reaction Exolytic cleavage of the (1-&gt;4)-beta-glycosidic linkage between N-acetylmuramic acid (MurNAc) and N-acetylglucosamine (GlcNAc) residues in peptidoglycan, from either the reducing or the non-reducing ends of the peptidoglycan chains, with concomitant formation of a 1,6-anhydrobond in the MurNAc residue.. Its function is as follows. Murein-degrading enzyme that degrades murein glycan strands and insoluble, high-molecular weight murein sacculi, with the concomitant formation of a 1,6-anhydromuramoyl product. Lytic transglycosylases (LTs) play an integral role in the metabolism of the peptidoglycan (PG) sacculus. Their lytic action creates space within the PG sacculus to allow for its expansion as well as for the insertion of various structures such as secretion systems and flagella. This is Membrane-bound lytic murein transglycosylase F from Pseudomonas aeruginosa (strain UCBPP-PA14).